We begin with the raw amino-acid sequence, 345 residues long: Phenylalanine--tRNA ligase alpha subunit (345 aa).

Position 253 (glutamate 253) interacts with Mg(2+).

The protein belongs to the class-II aminoacyl-tRNA synthetase family. Phe-tRNA synthetase alpha subunit type 1 subfamily. As to quaternary structure, tetramer of two alpha and two beta subunits. Mg(2+) serves as cofactor.

Its subcellular location is the cytoplasm. It carries out the reaction tRNA(Phe) + L-phenylalanine + ATP = L-phenylalanyl-tRNA(Phe) + AMP + diphosphate + H(+). This Nitratidesulfovibrio vulgaris (strain DP4) (Desulfovibrio vulgaris) protein is Phenylalanine--tRNA ligase alpha subunit.